A 569-amino-acid polypeptide reads, in one-letter code: Urease subunit beta (569 aa).

Residues 131–569 form the Urease domain; that stretch reads GGIDTHIHFI…VSLGQLYCLF (439 aa). Residues His136, His138, and Lys219 each contribute to the Ni(2+) site. N6-carboxylysine is present on Lys219. His221 is a substrate binding site. Ni(2+) contacts are provided by His248 and His274. His322 acts as the Proton donor in catalysis. Asp362 provides a ligand contact to Ni(2+).

It belongs to the metallo-dependent hydrolases superfamily. Urease alpha subunit family. Heterohexamer of 3 UreA (alpha) and 3 UreB (beta) subunits. Requires Ni cation as cofactor. Post-translationally, carboxylation allows a single lysine to coordinate two nickel ions.

It is found in the cytoplasm. The enzyme catalyses urea + 2 H2O + H(+) = hydrogencarbonate + 2 NH4(+). It participates in nitrogen metabolism; urea degradation; CO(2) and NH(3) from urea (urease route): step 1/1. This is Urease subunit beta from Helicobacter hepaticus (strain ATCC 51449 / 3B1).